A 186-amino-acid chain; its full sequence is ADP-ribosylation factor-like protein DDB_G0292332 (186 aa).

GTP contacts are provided by residues 24 to 31 (GVENVGKT), 78 to 82 (DIGGK), and 138 to 141 (NKQD).

The protein belongs to the small GTPase superfamily. Arf family.

Binds and exchanges GTP and GDP. This chain is ADP-ribosylation factor-like protein DDB_G0292332, found in Dictyostelium discoideum (Social amoeba).